A 109-amino-acid polypeptide reads, in one-letter code: Set1 complex component sdc1 (109 aa).

The interval 49 to 109 (QQKQKEIVNQ…SSNPGKNSAS (61 aa)) is disordered. A compositionally biased stretch (polar residues) spans 73–87 (STPTMAEQVQTSFSN). A compositionally biased stretch (low complexity) spans 88 to 101 (PASTPLTQTSSPSS).

This sequence belongs to the dpy-30 family. As to quaternary structure, component of the COMPASS (Set1C) complex composed of ash2, sdc1, set1, shg1, spp1, swd1, swd2 and swd3. Component of the Lid2 complex composed of ash2, jmj3, lid2, sdc1 and snt2.

Its subcellular location is the nucleus. Its function is as follows. The COMPASS (Set1C) complex specifically mono-, di- and trimethylates histone H3 to form H3K4me1/2/3, which subsequently activates gene expression by regulating transcription elongation and plays a role in telomere length maintenance. This is Set1 complex component sdc1 (sdc1) from Schizosaccharomyces pombe (strain 972 / ATCC 24843) (Fission yeast).